The following is a 181-amino-acid chain: TATA-box-binding protein (181 aa).

2 tandem repeats follow at residues 8 to 84 and 99 to 175.

It belongs to the TBP family.

General factor that plays a role in the activation of archaeal genes transcribed by RNA polymerase. Binds specifically to the TATA box promoter element which lies close to the position of transcription initiation. The polypeptide is TATA-box-binding protein (Methanobrevibacter smithii (strain ATCC 35061 / DSM 861 / OCM 144 / PS)).